Consider the following 414-residue polypeptide: Serine/threonine transporter SstT (414 aa).

The next 9 membrane-spanning stretches (helical) occupy residues 19–39, 55–75, 89–109, 148–168, 189–209, 223–243, 297–317, 323–343, and 363–383; these read IIVGLVLGVVTALISPDLEPV, FVKGLRAVAPILIFVLVIAAI, IVMLYIIGTFGASIVAVLASF, ALATSNFIGILAWAIALGIAL, IVHLVISLAPFGIFGLVAATL, LLLVLLGSMLFMALVVNPFIV, IPLGATINMAGAAITVTVLTL, LGIPVSIPTAILLSVVSAVCA, and LFGISGDVAAQVIAVGFVIGV.

The protein belongs to the dicarboxylate/amino acid:cation symporter (DAACS) (TC 2.A.23) family.

The protein localises to the cell inner membrane. The catalysed reaction is L-serine(in) + Na(+)(in) = L-serine(out) + Na(+)(out). It catalyses the reaction L-threonine(in) + Na(+)(in) = L-threonine(out) + Na(+)(out). Involved in the import of serine and threonine into the cell, with the concomitant import of sodium (symport system). This is Serine/threonine transporter SstT from Actinobacillus succinogenes (strain ATCC 55618 / DSM 22257 / CCUG 43843 / 130Z).